Here is a 306-residue protein sequence, read N- to C-terminus: tRNA dimethylallyltransferase (306 aa).

13 to 20 (GPTGAGKT) lines the ATP pocket. 15 to 20 (TGAGKT) lines the substrate pocket. Interaction with substrate tRNA stretches follow at residues 38-41 (DSRQ) and 161-165 (QRNAR).

The protein belongs to the IPP transferase family. Monomer. It depends on Mg(2+) as a cofactor.

It carries out the reaction adenosine(37) in tRNA + dimethylallyl diphosphate = N(6)-dimethylallyladenosine(37) in tRNA + diphosphate. Catalyzes the transfer of a dimethylallyl group onto the adenine at position 37 in tRNAs that read codons beginning with uridine, leading to the formation of N6-(dimethylallyl)adenosine (i(6)A). This chain is tRNA dimethylallyltransferase, found in Maridesulfovibrio salexigens (strain ATCC 14822 / DSM 2638 / NCIMB 8403 / VKM B-1763) (Desulfovibrio salexigens).